The chain runs to 478 residues: Putrescine oxidase (478 aa).

Residue 15–70 (RDVVVVGAGPAGLMAARTLVAAGRTVAVLEARDRVGGRTWSKTVDGAFLEIGGQWI) participates in FAD binding.

It belongs to the flavin monoamine oxidase family. Requires FAD as cofactor.

The enzyme catalyses putrescine + O2 + H2O = 4-aminobutanal + H2O2 + NH4(+). This chain is Putrescine oxidase (puo), found in Kocuria rosea (Deinococcus erythromyxa).